The primary structure comprises 201 residues: MSDFYADRLFNALERNEVAPGSLLVAAPDLASPEFSRSVILVIEHSHATTFGVNLASRSDLAVANVLPEWTELTAKPQALYIGGPLSQQAVVGLGVTKPGVDIESSTKFNKLANRLVHVDLRVTPDEVRDDLEGMRFFAGYAEWAPGQLNDEIEQGDWYVAPALPSDVLAPGRVDVWGDVMRRQPMPLPLYSTHPSDPSDN.

This sequence belongs to the UPF0301 (AlgH) family.

This Corynebacterium efficiens (strain DSM 44549 / YS-314 / AJ 12310 / JCM 11189 / NBRC 100395) protein is UPF0301 protein CE2927.